The sequence spans 201 residues: Recombination protein RecR (201 aa).

Residues 60-75 (CHACGNVDTSDPCTIC) form a C4-type zinc finger. A Toprim domain is found at 83–178 (TTLVVVEDVS…TITRLAHGVP (96 aa)).

This sequence belongs to the RecR family.

In terms of biological role, may play a role in DNA repair. It seems to be involved in an RecBC-independent recombinational process of DNA repair. It may act with RecF and RecO. This Methylorubrum populi (strain ATCC BAA-705 / NCIMB 13946 / BJ001) (Methylobacterium populi) protein is Recombination protein RecR.